A 155-amino-acid polypeptide reads, in one-letter code: Small ribosomal subunit protein uS7 (155 aa).

It belongs to the universal ribosomal protein uS7 family. As to quaternary structure, part of the 30S ribosomal subunit. Contacts proteins S9 and S11.

Functionally, one of the primary rRNA binding proteins, it binds directly to 16S rRNA where it nucleates assembly of the head domain of the 30S subunit. Is located at the subunit interface close to the decoding center, probably blocks exit of the E-site tRNA. The sequence is that of Small ribosomal subunit protein uS7 from Sulfurimonas denitrificans (strain ATCC 33889 / DSM 1251) (Thiomicrospira denitrificans (strain ATCC 33889 / DSM 1251)).